Consider the following 1053-residue polypeptide: MAAAYLDPNLNHTPSSSAKTHLGTGMERSPGAMERVLKVFHYFENSSEPTTWASIIRHGDATDVRGIIQKIVDCHKVKNVACYGLRLSHLQSEEVHWLHLDMGVSNVREKFELAHPPEEWKYELRIRYLPKGFLNQFTEDKPTLNFFYQQVKNDYMLEIADQVDQEIALKLGCLEIRRSYGEMRGNALEKKSNYEVLEKDVGLRRFFPKSLLDSVKAKTLRKLIQQTFRQFANLNREESILKFFEILSPVYRFDKECFKCALGSSWIISVELAIGPEEGISYLTDKGANPTHLADFNQVQTIQYSNSEDKDRKGMLQLKIAGAPEPLTVTAPSLTIAENMADLIDGYCRLVNGATQSFIIRPQKEGERALPSIPKLANNEKQGVRSHTVSVSETDDYAEIIDEEDTYTMPSTRDYEIQRERIELGRCIGEGQFGDVHQGIYMSPENPAMAVAIKTCKNCTSDSVREKFLQEALTMRQFDHPHIVKLIGVITENPVWIIMELCTLGELRSFLQVRKFSLDLASLILYAYQLSTALAYLESKRFVHRDIAARNVLVSATDCVKLGDFGLSRYMEDSTYYKASKGKLPIKWMAPESINFRRFTSASDVWMFGVCMWEILMHGVKPFQGVKNNDVIGRIENGERLPMPPNCPPTLYSLMTKCWAYDPSRRPRFTELKAQLSTILEEEKLQQEERMRMESRRQVTVSWDSGGSDEAPPKPSRPGYPSPRSSEGFYPSPQHMVQPNHYQVSGYSGSHGIPAMAGSIYPGQASLLDQTDSWNHRPQEVSAWQPNMEDSGTLDVRGMGQVLPTHLMEERLIRQQQEMEEDQRWLEKEERFLVMKPDVRLSRGSIEREDGGLQGPAGNQHIYQPVGKPDHAAPPKKPPRPGAPHLGSLASLNSPVDSYNEGVKIKPQEISPPPTANLDRSNDKVYENVTGLVKAVIEMSSKIQPAPPEEYVPMVKEVGLALRTLLATVDESLPVLPASTHREIEMAQKLLNSDLAELINKMKLAQQYVMTSLQQEYKKQMLTAAHALAVDAKNLLDVIDQARLKMISQSRPH.

The disordered stretch occupies residues 1–27 (MAAAYLDPNLNHTPSSSAKTHLGTGME). Residues 10 to 19 (LNHTPSSSAK) show a composition bias toward polar residues. In terms of domain architecture, FERM spans 35–355 (RVLKVFHYFE…GYCRLVNGAT (321 aa)). Tyr397 is subject to Phosphotyrosine; by autocatalysis. The residue at position 407 (Tyr407) is a Phosphotyrosine. The 259-residue stretch at 422-680 (IELGRCIGEG…ELKAQLSTIL (259 aa)) folds into the Protein kinase domain. Residues 428-434 (IGEGQFG), Lys454, and 500-502 (ELC) each bind ATP. Catalysis depends on Asp546, which acts as the Proton acceptor. Tyr576 and Tyr577 each carry phosphotyrosine; by SRC. The segment covering 686-697 (QQEERMRMESRR) has biased composition (basic and acidic residues). 2 disordered regions span residues 686–741 (QQEE…QPNH) and 843–892 (RGSI…LASL). At Tyr863 the chain carries Phosphotyrosine. Phosphoserine is present on Ser911. Tyr926 is modified (phosphotyrosine).

Belongs to the protein kinase superfamily. Tyr protein kinase family. FAK subfamily. In terms of assembly, interacts with ARHGAP26, GRB7, DCC, PIK3R1, PXN and SRC. Interacts with the ARP2/3 complex. Post-translationally, phosphorylated on tyrosine residues upon activation, e.g. upon integrin signaling. Tyr-397 is the major autophosphorylation site, but other kinases can also phosphorylate this residue. Phosphorylation at Tyr-397 promotes interaction with SRC and SRC family members, leading to phosphorylation at Tyr-576, Tyr-577 and at additional tyrosine residues. Isoform 2 is phosphorylated on serine or threonine residues, but apparently not on tyrosine residues.

Its subcellular location is the cell junction. It is found in the focal adhesion. The protein localises to the cell membrane. The protein resides in the cytoplasm. It localises to the perinuclear region. Its subcellular location is the cell cortex. It is found in the cytoskeleton. The protein localises to the microtubule organizing center. The protein resides in the centrosome. It localises to the nucleus. Its subcellular location is the cilium basal body. It carries out the reaction L-tyrosyl-[protein] + ATP = O-phospho-L-tyrosyl-[protein] + ADP + H(+). With respect to regulation, subject to autoinhibition, mediated by interactions between the FERM domain and the kinase domain. Activated by autophosphorylation at Tyr-397. This promotes interaction with SRC and phosphorylation at Tyr-576 and Tyr-577 in the kinase activation loop. Phosphorylation at Tyr-576 and Tyr-577 is required for maximal kinase activity. Inhibited by TAE226. In terms of biological role, non-receptor protein-tyrosine kinase that plays an essential role in regulating cell migration, adhesion, spreading, reorganization of the actin cytoskeleton, formation and disassembly of focal adhesions and cell protrusions, cell cycle progression, cell proliferation and apoptosis. Required for early embryonic development, embryonic angiogenesis, normal cardiomyocyte migration and proliferation, and normal heart development. Regulates axon growth and neuronal cell migration, axon branching and synapse formation; required for normal development of the nervous system. Plays a role in osteogenesis and differentiation of osteoblasts. Functions in integrin signal transduction, but also in signaling downstream of numerous growth factor receptors, G-protein coupled receptors (GPCR), ephrin receptors, netrin receptors and LDL receptors. Forms multisubunit signaling complexes with SRC and SRC family members upon activation; this leads to the phosphorylation of additional tyrosine residues, creating binding sites for scaffold proteins, effectors and substrates. Regulates numerous signaling pathways. Promotes activation of phosphatidylinositol 3-kinase and the AKT1 signaling cascade. Promotes activation of MAPK1/ERK2, MAPK3/ERK1 and the MAP kinase signaling cascade. Promotes localized and transient activation of guanine nucleotide exchange factors (GEFs) and GTPase-activating proteins (GAPs), and thereby modulates the activity of Rho family GTPases. Signaling via CAS family members mediates activation of RAC1. Regulates P53/TP53 activity and stability. Phosphorylates SRC; this increases SRC kinase activity. Isoform 2 (FRNK) does not contain a kinase domain and inhibits PTK2/FAK1 phosphorylation and signaling. The polypeptide is Focal adhesion kinase 1 (PTK2) (Gallus gallus (Chicken)).